The sequence spans 276 residues: Octanoyltransferase LipM (276 aa).

Positions 33-247 (GELKPTLRFY…GFKDAFSLTF (215 aa)) constitute a BPL/LPL catalytic domain. The Acyl-thioester intermediate role is filled by C150.

The protein belongs to the octanoyltransferase LipM family. As to quaternary structure, monomer.

The catalysed reaction is octanoyl-[ACP] + L-lysyl-[protein] = N(6)-octanoyl-L-lysyl-[protein] + holo-[ACP] + H(+). The protein operates within protein modification; protein lipoylation via endogenous pathway; protein N(6)-(lipoyl)lysine from octanoyl-[acyl-carrier-protein]. In terms of biological role, catalyzes the transfer of endogenously produced octanoic acid from octanoyl-acyl-carrier-protein onto the lipoyl domain of GcvH, an intermediate carrier during protein lipoylation. This Exiguobacterium sp. (strain ATCC BAA-1283 / AT1b) protein is Octanoyltransferase LipM.